A 165-amino-acid polypeptide reads, in one-letter code: Protein SprT (165 aa).

The region spanning 20-163 is the SprT-like domain; sequence EKLAQANLKL…RCVHCGEQLV (144 aa). Residue His78 coordinates Zn(2+). Glu79 is a catalytic residue. Zn(2+) is bound at residue His82.

Belongs to the SprT family. The cofactor is Zn(2+).

The protein localises to the cytoplasm. This Escherichia coli (strain K12 / MC4100 / BW2952) protein is Protein SprT.